We begin with the raw amino-acid sequence, 66 residues long: Protein translocase subunit SecE (66 aa).

A helical membrane pass occupies residues 29–49; the sequence is LIASTLVVVAAVFIFSLICLV.

It belongs to the SecE/SEC61-gamma family. As to quaternary structure, component of the Sec protein translocase complex. Heterotrimer consisting of SecY, SecE and SecG subunits. The heterotrimers can form oligomers, although 1 heterotrimer is thought to be able to translocate proteins. Interacts with the ribosome. Interacts with SecDF, and other proteins may be involved. Interacts with SecA.

The protein localises to the cell inner membrane. In terms of biological role, essential subunit of the Sec protein translocation channel SecYEG. Clamps together the 2 halves of SecY. May contact the channel plug during translocation. The sequence is that of Protein translocase subunit SecE from Rickettsia typhi (strain ATCC VR-144 / Wilmington).